We begin with the raw amino-acid sequence, 310 residues long: Cysteine synthase (310 aa).

The residue at position 44 (K44) is an N6-(pyridoxal phosphate)lysine. Residues N74, 179–183 (GTGGT), and S267 contribute to the pyridoxal 5'-phosphate site.

The protein belongs to the cysteine synthase/cystathionine beta-synthase family. It depends on pyridoxal 5'-phosphate as a cofactor.

It catalyses the reaction O-acetyl-L-serine + hydrogen sulfide = L-cysteine + acetate. Its pathway is amino-acid biosynthesis; L-cysteine biosynthesis; L-cysteine from L-serine: step 2/2. The protein is Cysteine synthase (cysK) of Neisseria meningitidis serogroup B (strain ATCC BAA-335 / MC58).